Here is a 467-residue protein sequence, read N- to C-terminus: Dihydrolipoyl dehydrogenase (467 aa).

FAD contacts are provided by residues 33–41 (EPKYWGGIC), Lys-50, and Gly-113. Cys-41 and Cys-46 form a disulfide bridge. NAD(+)-binding positions include 181-185 (GAGAI), Glu-204, and 269-272 (AIGF). Residues Asp-312 and Ala-320 each coordinate FAD. His-446 serves as the catalytic Proton acceptor.

Belongs to the class-I pyridine nucleotide-disulfide oxidoreductase family. As to quaternary structure, homodimer. Part of the PDH complex, consisting of multiple copies of AceE (E1), DlaT (E2) and Lpd (E3), and of the BCKADH complex, consisting of multiple copies of BkdA/BkdB (E1), BkdC (E2) and Lpd (E3). The cofactor is FAD.

The protein localises to the cytoplasm. It catalyses the reaction N(6)-[(R)-dihydrolipoyl]-L-lysyl-[protein] + NAD(+) = N(6)-[(R)-lipoyl]-L-lysyl-[protein] + NADH + H(+). Functionally, lipoamide dehydrogenase is a component of the alpha-ketoacid dehydrogenase complexes. Catalyzes the reoxidation of dihydrolipoyl groups which are covalently attached to the lipoate acyltransferase components (E2) of the complexes. The protein is Dihydrolipoyl dehydrogenase (lpd) of Mycobacterium leprae (strain TN).